A 493-amino-acid polypeptide reads, in one-letter code: Putative glycerol-3-phosphate transporter 5 (493 aa).

Helical transmembrane passes span 25–44, 83–103, 113–133, 145–165, 185–205, 207–227, 292–312, 328–348, 352–372, 375–395, 428–448, and 452–472; these read FTFH…ASFH, LGEL…FAGH, FLVF…LGYW, VQIV…SVVG, SVGN…GWGW, FVLP…FLVV, FCLF…PYYL, GILS…AGFI, IKAR…ALIM, VYGS…GLLV, AIID…AGYI, and GWNS…LFLV.

The protein belongs to the major facilitator superfamily. Organophosphate:Pi antiporter (OPA) (TC 2.A.1.4) family.

The protein localises to the membrane. The protein is Putative glycerol-3-phosphate transporter 5 of Arabidopsis thaliana (Mouse-ear cress).